The following is a 367-amino-acid chain: Cytochrome b (367 aa).

4 helical membrane-spanning segments follow: residues M20–M40, W64–I85, W101–L121, and F166–I186. Residues H70 and H84 each contribute to the heme b site. Heme b contacts are provided by H170 and H184. H189 contributes to the a ubiquinone binding site. 4 helical membrane passes run I214 to S234, L276 to S296, I308 to A328, and Y335 to M355.

It belongs to the cytochrome b family. As to quaternary structure, the main subunits of complex b-c1 are: cytochrome b, cytochrome c1 and the Rieske protein. Heme b is required as a cofactor.

It is found in the mitochondrion inner membrane. Functionally, component of the ubiquinol-cytochrome c reductase complex (complex III or cytochrome b-c1 complex) that is part of the mitochondrial respiratory chain. The b-c1 complex mediates electron transfer from ubiquinol to cytochrome c. Contributes to the generation of a proton gradient across the mitochondrial membrane that is then used for ATP synthesis. This chain is Cytochrome b (MT-CYB), found in Albinaria caerulea (Land snail).